We begin with the raw amino-acid sequence, 227 residues long: Cytochrome c oxidase subunit 2 (227 aa).

Position 1 is an N-formylmethionine (Met-1). Topologically, residues 1-14 (MAYPMQLGFQDATS) are mitochondrial intermembrane. Residues 15–45 (PIMEELLHFHDHTLMIVFLISSLVLYIISLM) form a helical membrane-spanning segment. Residues 46–59 (LTTKLTHTSTMDAQ) lie on the Mitochondrial matrix side of the membrane. The helical transmembrane segment at 60-87 (EVETIWTILPAIILILIALPSLRILYMM) threads the bilayer. Over 88–227 (DEINNPSLTV…YFEKWSASML (140 aa)) the chain is Mitochondrial intermembrane. Residues His-161, Cys-196, Glu-198, Cys-200, His-204, and Met-207 each coordinate Cu cation. Glu-198 lines the Mg(2+) pocket. Tyr-218 carries the post-translational modification Phosphotyrosine.

This sequence belongs to the cytochrome c oxidase subunit 2 family. Component of the cytochrome c oxidase (complex IV, CIV), a multisubunit enzyme composed of 14 subunits. The complex is composed of a catalytic core of 3 subunits MT-CO1, MT-CO2 and MT-CO3, encoded in the mitochondrial DNA, and 11 supernumerary subunits COX4I, COX5A, COX5B, COX6A, COX6B, COX6C, COX7A, COX7B, COX7C, COX8 and NDUFA4, which are encoded in the nuclear genome. The complex exists as a monomer or a dimer and forms supercomplexes (SCs) in the inner mitochondrial membrane with NADH-ubiquinone oxidoreductase (complex I, CI) and ubiquinol-cytochrome c oxidoreductase (cytochrome b-c1 complex, complex III, CIII), resulting in different assemblies (supercomplex SCI(1)III(2)IV(1) and megacomplex MCI(2)III(2)IV(2)). Found in a complex with TMEM177, COA6, COX18, COX20, SCO1 and SCO2. Interacts with TMEM177 in a COX20-dependent manner. Interacts with COX20. Interacts with COX16. Cu cation serves as cofactor.

It is found in the mitochondrion inner membrane. The catalysed reaction is 4 Fe(II)-[cytochrome c] + O2 + 8 H(+)(in) = 4 Fe(III)-[cytochrome c] + 2 H2O + 4 H(+)(out). In terms of biological role, component of the cytochrome c oxidase, the last enzyme in the mitochondrial electron transport chain which drives oxidative phosphorylation. The respiratory chain contains 3 multisubunit complexes succinate dehydrogenase (complex II, CII), ubiquinol-cytochrome c oxidoreductase (cytochrome b-c1 complex, complex III, CIII) and cytochrome c oxidase (complex IV, CIV), that cooperate to transfer electrons derived from NADH and succinate to molecular oxygen, creating an electrochemical gradient over the inner membrane that drives transmembrane transport and the ATP synthase. Cytochrome c oxidase is the component of the respiratory chain that catalyzes the reduction of oxygen to water. Electrons originating from reduced cytochrome c in the intermembrane space (IMS) are transferred via the dinuclear copper A center (CU(A)) of subunit 2 and heme A of subunit 1 to the active site in subunit 1, a binuclear center (BNC) formed by heme A3 and copper B (CU(B)). The BNC reduces molecular oxygen to 2 water molecules using 4 electrons from cytochrome c in the IMS and 4 protons from the mitochondrial matrix. This Bos indicus (Zebu) protein is Cytochrome c oxidase subunit 2 (MT-CO2).